The primary structure comprises 148 residues: Small ribosomal subunit protein uS7c (148 aa).

Belongs to the universal ribosomal protein uS7 family. In terms of assembly, part of the 30S ribosomal subunit.

Its subcellular location is the plastid. It is found in the chloroplast. Its function is as follows. One of the primary rRNA binding proteins, it binds directly to 16S rRNA where it nucleates assembly of the head domain of the 30S subunit. This is Small ribosomal subunit protein uS7c (rps7) from Cyanidioschyzon merolae (strain NIES-3377 / 10D) (Unicellular red alga).